A 493-amino-acid polypeptide reads, in one-letter code: Dihydro-heme d1 dehydrogenase (493 aa).

Residues 1–18 form the signal peptide; that stretch reads MRLIGLALGLLLGALAQA. The region spanning 19 to 96 is the Cytochrome c domain; the sequence is GEAPGEALYR…ALVAYLYQAP (78 aa). Residues C31, C34, H35, R68, and M73 each contribute to the heme c site. A D1-heme domain region spans residues 114 to 468; it reads PHPLATLPSR…YDAHSLEEVK (355 aa). Heme d1-binding residues include H165, G167, K169, R182, R207, N208, H341, R390, and H435. Residue R182 participates in heme c binding.

It belongs to the cytochrome c family. Monomer. Heme c serves as cofactor.

The protein resides in the periplasm. It carries out the reaction dihydro-heme d1 + A = heme d1 + AH2. Its pathway is porphyrin-containing compound metabolism. Functionally, involved in heme d1 biosynthesis. Catalyzes the introduction of a double bond into the propionate side chain of pyrrole ring D of dihydro-heme d1, therefore converting dihydro-heme d1 to heme d1. The protein is Dihydro-heme d1 dehydrogenase of Pseudomonas aeruginosa (strain ATCC 15692 / DSM 22644 / CIP 104116 / JCM 14847 / LMG 12228 / 1C / PRS 101 / PAO1).